Consider the following 205-residue polypeptide: Lymphotoxin-alpha (205 aa).

The first 34 residues, 1–34, serve as a signal peptide directing secretion; that stretch reads MTPPERLFLPRVRGTTLHLLLLGLLLVLLPGAQG. Residue Thr41 is glycosylated (O-linked (GalNAc...) threonine). A THD domain is found at 63 to 205; it reads PAAHLIGDPS…STVFFGAFAL (143 aa). Asn96 is a glycosylation site (N-linked (GlcNAc...) asparagine).

Belongs to the tumor necrosis factor family. In terms of assembly, homotrimer, and heterotrimer of either two LTB and one LTA subunits or (less prevalent) two LTA and one LTB subunits. Interacts with TNFRSF14.

The protein resides in the secreted. It localises to the membrane. In terms of biological role, cytokine that in its homotrimeric form binds to TNFRSF1A/TNFR1, TNFRSF1B/TNFBR and TNFRSF14/HVEM. In its heterotrimeric form with LTB binds to TNFRSF3/LTBR. Lymphotoxin is produced by lymphocytes and is cytotoxic for a wide range of tumor cells in vitro and in vivo. The sequence is that of Lymphotoxin-alpha (LTA) from Pan troglodytes (Chimpanzee).